The primary structure comprises 207 residues: Uracil phosphoribosyltransferase (207 aa).

5-phospho-alpha-D-ribose 1-diphosphate-binding positions include Arg77, Arg102, and 129 to 137 (DPMLATGGS). Uracil contacts are provided by residues Ile192 and 197 to 199 (GDA). Asp198 lines the 5-phospho-alpha-D-ribose 1-diphosphate pocket.

It belongs to the UPRTase family. The cofactor is Mg(2+).

The catalysed reaction is UMP + diphosphate = 5-phospho-alpha-D-ribose 1-diphosphate + uracil. Its pathway is pyrimidine metabolism; UMP biosynthesis via salvage pathway; UMP from uracil: step 1/1. Allosterically activated by GTP. Its function is as follows. Catalyzes the conversion of uracil and 5-phospho-alpha-D-ribose 1-diphosphate (PRPP) to UMP and diphosphate. The chain is Uracil phosphoribosyltransferase from Mycoplasma mycoides subsp. mycoides SC (strain CCUG 32753 / NCTC 10114 / PG1).